The chain runs to 75 residues: UPF0235 protein Mvan_2846 (75 aa).

The protein belongs to the UPF0235 family.

The sequence is that of UPF0235 protein Mvan_2846 from Mycolicibacterium vanbaalenii (strain DSM 7251 / JCM 13017 / BCRC 16820 / KCTC 9966 / NRRL B-24157 / PYR-1) (Mycobacterium vanbaalenii).